Consider the following 884-residue polypeptide: Chitin synthase E (884 aa).

Disordered stretches follow at residues 1–58 and 73–108; these read MGTP…PAVS and AVFA…SRAG. Polar residues-rich tracts occupy residues 37 to 48 and 84 to 93; these read QSLLERNNSSHY and EAASENTFRA. N44 is a glycosylation site (N-linked (GlcNAc...) asparagine). Residues 95 to 105 show a composition bias toward basic and acidic residues; the sequence is SNGDKASREGS. N301 carries N-linked (GlcNAc...) asparagine glycosylation. The next 7 helical transmembrane spans lie at 513–532, 556–576, 597–617, 635–655, 681–701, 708–728, and 812–832; these read WLNG…GRIY, IMTW…MDLV, IVNN…FIMA, YFSL…VGAF, GGIV…ASVL, IITS…ILMV, and VLVC…TATG. An N-linked (GlcNAc...) asparagine glycan is attached at N840. A helical membrane pass occupies residues 852-872; it reads VILWITAGLSLFRFIGSLWFL.

The protein belongs to the chitin synthase family. Class III subfamily.

The protein resides in the cell membrane. The enzyme catalyses [(1-&gt;4)-N-acetyl-beta-D-glucosaminyl](n) + UDP-N-acetyl-alpha-D-glucosamine = [(1-&gt;4)-N-acetyl-beta-D-glucosaminyl](n+1) + UDP + H(+). Functionally, polymerizes chitin, a structural polymer of the cell wall and septum, by transferring the sugar moiety of UDP-GlcNAc to the non-reducing end of the growing chitin polymer. Plays an important role in septal growth or maintenance. Mediates colony spore formation. ChsE and chsD seem to play a functionally redundant role in lateral cell wall chitin synthesis. Involved in resistance to echinocandins. The polypeptide is Chitin synthase E (Aspergillus niger (strain ATCC MYA-4892 / CBS 513.88 / FGSC A1513)).